We begin with the raw amino-acid sequence, 359 residues long: Protein mab-21-like 2 (359 aa).

This sequence belongs to the mab-21 family. Expressed in the adult cerebellum and eye, with lower levels in the adult forebrain. In embryos at 10.5 days post-coitum strongly expressed in the rostral and distal regions of the developing neural retina, with no expression immediately adjacent to the closing optic fissure. Expression is also observed in the dorsal and ventral aspects of the developing forelimb bud and in the developing pharyngeal arches, as well as in the midbrain.

Its subcellular location is the nucleus. It localises to the cytoplasm. Its function is as follows. Required for several aspects of embryonic development including normal development of the eye, notochord, neural tube and other organ tissues, and for embryonic turning. This chain is Protein mab-21-like 2 (Mab21l2), found in Mus musculus (Mouse).